We begin with the raw amino-acid sequence, 376 residues long: Aspartate-semialdehyde dehydrogenase (376 aa).

NADP(+)-binding positions include 11–14 (RGMV), 38–39 (TS), and Gln-74. Residue Arg-103 participates in phosphate binding. Cys-136 serves as the catalytic Acyl-thioester intermediate. Gln-163 contributes to the substrate binding site. NADP(+) is bound by residues 166–167 (SG) and Pro-194. Residue Glu-242 coordinates substrate. Residue Lys-245 coordinates phosphate. Substrate is bound at residue Arg-273. Catalysis depends on His-280, which acts as the Proton acceptor. Gln-356 is a binding site for NADP(+).

The protein belongs to the aspartate-semialdehyde dehydrogenase family. In terms of assembly, homodimer.

The catalysed reaction is L-aspartate 4-semialdehyde + phosphate + NADP(+) = 4-phospho-L-aspartate + NADPH + H(+). The protein operates within amino-acid biosynthesis; L-lysine biosynthesis via DAP pathway; (S)-tetrahydrodipicolinate from L-aspartate: step 2/4. Its pathway is amino-acid biosynthesis; L-methionine biosynthesis via de novo pathway; L-homoserine from L-aspartate: step 2/3. It participates in amino-acid biosynthesis; L-threonine biosynthesis; L-threonine from L-aspartate: step 2/5. In terms of biological role, catalyzes the NADPH-dependent formation of L-aspartate-semialdehyde (L-ASA) by the reductive dephosphorylation of L-aspartyl-4-phosphate. The protein is Aspartate-semialdehyde dehydrogenase of Bordetella pertussis (strain Tohama I / ATCC BAA-589 / NCTC 13251).